The primary structure comprises 439 residues: 23S rRNA (uracil(1939)-C(5))-methyltransferase RlmD (439 aa).

Positions 10 to 69 (KTQLNTRHQAVQVERLDHHGAGIAYLKKKPLFIDGALPGEEVVTQLVEEKSKFARGKLIK) constitute a TRAM domain. Residues C82, C88, C91, and C169 each contribute to the [4Fe-4S] cluster site. Residues Q272, F301, N306, E322, N349, and D370 each coordinate S-adenosyl-L-methionine. The active-site Nucleophile is C396.

It belongs to the class I-like SAM-binding methyltransferase superfamily. RNA M5U methyltransferase family. RlmD subfamily.

It catalyses the reaction uridine(1939) in 23S rRNA + S-adenosyl-L-methionine = 5-methyluridine(1939) in 23S rRNA + S-adenosyl-L-homocysteine + H(+). Catalyzes the formation of 5-methyl-uridine at position 1939 (m5U1939) in 23S rRNA. The protein is 23S rRNA (uracil(1939)-C(5))-methyltransferase RlmD of Vibrio campbellii (strain ATCC BAA-1116).